The primary structure comprises 201 residues: Mediator of RNA polymerase II transcription subunit 22 (201 aa).

Positions S93–I123 form a coiled coil. A disordered region spans residues S182 to T201.

This sequence belongs to the Mediator complex subunit 22 family. As to quaternary structure, component of the Mediator complex.

It localises to the nucleus. Its function is as follows. Component of the Mediator complex, a coactivator involved in the regulated transcription of nearly all RNA polymerase II-dependent genes. Mediator functions as a bridge to convey information from gene-specific regulatory proteins to the basal RNA polymerase II transcription machinery. Mediator is recruited to promoters by direct interactions with regulatory proteins and serves as a scaffold for the assembly of a functional preinitiation complex with RNA polymerase II and the general transcription factors. The chain is Mediator of RNA polymerase II transcription subunit 22 (med22) from Xenopus laevis (African clawed frog).